Consider the following 458-residue polypeptide: MSLFRSRPAKIHFVGIGGIGMSGIAEVLLNLGYAVSGSDLKESEITRRLASLGGRVQRGHAAQHVEQVDVVVTSSAVRKDNPEVVEARRRKIPIIPRAEMLAELMRLKYGVAIAGSHGKTTTTSLAAHLLAHAGLDPTAVVGGKVNTFGSNAKLGRGDYMVVEADESDGSFLHIPPTIAIVTNIDPEHLDHWKTEEALRKGFLDFVNRVPFYGRAILCIDHPTVQSLLPEVESRYVTYGESHQADYRADGIEVSGHAVRFDAFRRDEPLGRFEVRLVGRHNALNALAVVAIADEMGVPADVTREALASFGGVQRRFTVRGEAGGVTVVDDYGHHPAEVKATLLGAREAFHRRVVCLFQPHRYTRTRDLLPEFATAFNDADVLLLTDIYAAGEEPIPGATSEALAEAIRACGHRDVSLVPRPELARAARQRVRPGDIVLTLGAGDITAAGPELLGLLEA.

ATP is bound at residue 115-121 (GSHGKTT).

This sequence belongs to the MurCDEF family.

It localises to the cytoplasm. It catalyses the reaction UDP-N-acetyl-alpha-D-muramate + L-alanine + ATP = UDP-N-acetyl-alpha-D-muramoyl-L-alanine + ADP + phosphate + H(+). Its pathway is cell wall biogenesis; peptidoglycan biosynthesis. In terms of biological role, cell wall formation. This is UDP-N-acetylmuramate--L-alanine ligase from Anaeromyxobacter sp. (strain Fw109-5).